We begin with the raw amino-acid sequence, 1315 residues long: MLDVNFFDELRIGLATADDIRQWSYGEVKKPETINYRTLKPEKDGLFCEKIFGPTRDWECYCGKYKRVRFKGIICERCGVEVTRAKVRRERMGHIELAAPVTHIWYFKGVPSRLGYLLDLAPKDLEKIIYFAAYVITDVNDEMRHNELSTLEAEMVVEKKAVEDQRDADLEARAQKLEADLAELEAEGAKSDVRRKVRDGGEREMRQLRDRAQRELDRLDEIWTTFTKLAPKQLIVDEVLYRELVDRYGEYFTGAMGAESIKKLIENFDIEAEAENLRETIRSGKGQKKLRALKRLKVVAAFQTNRNSPMGMVLDAVPVIPPELRPMVQLDGGRFATSDLNDLYRRVINRNNRLKRLIDLGAPEIIVNNEKRMLQESVDALFDNGRRGRPVTGPGNRPLKSLSDLLKGKQGRFRQNLLGKRVDYSGRSVIVVGPQLKLHQCGLPKLMALELFKPFVMKRLVDLNHAQNIKSAKRMVERQRPQVWDVLEEVIAEHPVLLNRAPTLHRLGIQAFEPQLVEGKAIQLHPLVCEAFNADFDGDQMAVHLPLSAEAQAEARILMLSSNNILSPASGKPLAMPRLDMVTGLYFLTTMIEGDKGEYRPAATDQPEEGVYSSPAEAIMAMDRGALSVRAKIKVRLTQLRPPAALEAELFENGWKPGLAWTAETTLGRVMFNELLPISYPFINEQMHKKVQARIINDLAERFPMIVVAQTVDKLKDAGFHWATRSGVTVSMADVLVPPQKQEILDRYEAEADGIERKYQRGALNHKERNDSLVKIWQDATEEVGKALEEHYPADNPIITIVKSGATGNFTQTRTLAGMKGLVTNPKGEFIPRPIKSSFREGLTVLEYFINTHGARKGLADTALRTADSGYLTRRLVDVSQDVIVREHDCETERGINVTLAERQPDGSLIRDPHVETSAFARTLATDAVDADGNVVIERGHDLGDPAIDKLLAAGIDHVKVRSVLTCASATGVCAMCYGRSMATGKLVDIGEAVGIVAAQSIGEPGTQLTMRTFHQGGVGEDITGGLPRVQELFEARVPRNKAPIADVSGRVQLEEGERFYKITIVPDDGGEEVVYDKLSKRQRLRVIKHEDGSEGVLSDGDHVEVGDQLMEGSADPHEVLRVQGPREVQIHLVHEVQEVYRAQGVSIHDKHIEVIVRQMLRRVTIIDSGATEFLPGSLTERAEFESENRRVVAEGGEPAAGRPVLMGITKASLATDSWLSAASFQETTRVLTDAAINCRSDKLQGLKENVIIGKLIPAGTGINRYRNIQVQPTEEARAAAYTIPSYEDQYYSPDFGQATGAAVPLDDYGYSDYR.

Zn(2+)-binding residues include Cys60, Cys62, Cys75, and Cys78. Positions 535, 537, and 539 each coordinate Mg(2+). 4 residues coordinate Zn(2+): Cys890, Cys967, Cys974, and Cys977.

Belongs to the RNA polymerase beta' chain family. In terms of assembly, the RNAP catalytic core consists of 2 alpha, 1 beta, 1 beta' and 1 omega subunit. When a sigma factor is associated with the core the holoenzyme is formed, which can initiate transcription. It depends on Mg(2+) as a cofactor. Zn(2+) is required as a cofactor.

The catalysed reaction is RNA(n) + a ribonucleoside 5'-triphosphate = RNA(n+1) + diphosphate. DNA-dependent RNA polymerase catalyzes the transcription of DNA into RNA using the four ribonucleoside triphosphates as substrates. The protein is DNA-directed RNA polymerase subunit beta' of Mycobacterium sp. (strain MCS).